We begin with the raw amino-acid sequence, 212 residues long: ATP-dependent dethiobiotin synthetase BioD (212 aa).

ATP is bound at residue 13–18 (GIGKTV). Residue Thr-17 participates in Mg(2+) binding. Lys-33 is a catalytic residue. Substrate is bound at residue Ser-37. Position 100 (Glu-100) interacts with Mg(2+). ATP contacts are provided by residues 100–103 (EGAG) and 184–186 (PLL).

This sequence belongs to the dethiobiotin synthetase family. In terms of assembly, homodimer. Mg(2+) is required as a cofactor.

The protein localises to the cytoplasm. It carries out the reaction (7R,8S)-7,8-diammoniononanoate + CO2 + ATP = (4R,5S)-dethiobiotin + ADP + phosphate + 3 H(+). Its pathway is cofactor biosynthesis; biotin biosynthesis; biotin from 7,8-diaminononanoate: step 1/2. In terms of biological role, catalyzes a mechanistically unusual reaction, the ATP-dependent insertion of CO2 between the N7 and N8 nitrogen atoms of 7,8-diaminopelargonic acid (DAPA, also called 7,8-diammoniononanoate) to form a ureido ring. The sequence is that of ATP-dependent dethiobiotin synthetase BioD from Brucella melitensis biotype 2 (strain ATCC 23457).